Consider the following 437-residue polypeptide: MDNEVEKNIEIWKVKKLVQSLEKARGNGTSMISLVIPPKGQIPLYQKMLTDEYGTASNIKSRVNRLSVLSAITSTQQKLKLYNTLPKNGLVLYCGDIITEDGKEKKVTFDIEPYKPINTSLYLCDNKFHTEVLSELLQADDKFGFIVMDGQGTLFGSVSGNTRTVLHKFTVDLPKKHGRGGQSALRFARLREEKRHNYVRKVAEVAVQNFITNDKVNVKGLILAGSADFKTDLAKSELFDPRLACKVISIVDVSYGGENGFNQAIELSAEALANVKYVQEKKLLEAYFDEISQDTGKFCYGIDDTLKALDLGAVEKLIVFENLETIRYTFKDAEDNEVIKFAEPEAKDKSFAIDKATGQEMDVVSEEPLIEWLAANYKNFGATLEFITDKSSEGAQFVTGFGGIGAMLRYKVNFEQLVDESEDEYYDEDEGSDYDFI.

Q182 carries the N5-methylglutamine modification. K331 is covalently cross-linked (Glycyl lysine isopeptide (Lys-Gly) (interchain with G-Cter in ubiquitin)). Phosphoserine is present on S421.

Belongs to the eukaryotic release factor 1 family. Component of the eRF1-eRF3-GTP ternary complex, composed of SUP45/eRF1, SUP35/eRF3 and GTP. Interacts with TPA1. In terms of processing, N5-methylated on Gln-182 by MTQ2.

It localises to the cytoplasm. Its function is as follows. Component of the eRF1-eRF3-GTP ternary complex, a ternary complex that mediates translation termination in response to the termination codons. The eRF1-eRF3-GTP complex binds to a stop codon in the ribosomal A-site. SUP45/eRF1 is responsible for stop codon recognition and inducing hydrolysis of peptidyl-tRNA. Following GTP hydrolysis by SUP35/eRF3, SUP35/eRF3 dissociates, permitting SUP45/eRF1 to accommodate fully in the A-site and mediate hydrolysis of peptidyl-tRNA. This is Eukaryotic peptide chain release factor subunit 1 (SUP45) from Saccharomyces cerevisiae (strain ATCC 204508 / S288c) (Baker's yeast).